Consider the following 462-residue polypeptide: Argininosuccinate lyase (462 aa).

Belongs to the lyase 1 family. Argininosuccinate lyase subfamily.

The protein resides in the cytoplasm. It catalyses the reaction 2-(N(omega)-L-arginino)succinate = fumarate + L-arginine. It participates in amino-acid biosynthesis; L-arginine biosynthesis; L-arginine from L-ornithine and carbamoyl phosphate: step 3/3. This Bacillus cereus (strain ATCC 14579 / DSM 31 / CCUG 7414 / JCM 2152 / NBRC 15305 / NCIMB 9373 / NCTC 2599 / NRRL B-3711) protein is Argininosuccinate lyase.